A 260-amino-acid chain; its full sequence is Voltage-dependent calcium channel gamma-6 subunit (260 aa).

Positions 14–33 are disordered; the sequence is RRGAAGRRRAHGQGRSGLTP. Residues 15–25 are compositionally biased toward basic residues; it reads RGAAGRRRAHG. 4 helical membrane-spanning segments follow: residues 43–63, 143–163, 169–189, and 221–241; these read LLLAAVGATLAVLSVGTEFWV, VIAVLGLAVMALGCLCIIMVL, FLLRVGAVCFGLSGLLLLVSL, and LGCGVGAGLILLLGAGCFLLL.

Belongs to the PMP-22/EMP/MP20 family. CACNG subfamily. Interacts with CACNA1C. Identified in a complex with the L-type calcium channel subunits CACNA1C, CACNA2D1 and either CACNB1 or CACNB2. As to expression, detected in heart left ventricle.

The protein resides in the cell membrane. Functionally, regulates the activity of L-type calcium channels that contain CACNA1C as pore-forming subunit. This Homo sapiens (Human) protein is Voltage-dependent calcium channel gamma-6 subunit (CACNG6).